The chain runs to 193 residues: dTTP/UTP pyrophosphatase (193 aa).

The active-site Proton acceptor is the Asp68.

The protein belongs to the Maf family. YhdE subfamily. It depends on a divalent metal cation as a cofactor.

The protein localises to the cytoplasm. The catalysed reaction is dTTP + H2O = dTMP + diphosphate + H(+). It carries out the reaction UTP + H2O = UMP + diphosphate + H(+). Nucleoside triphosphate pyrophosphatase that hydrolyzes dTTP and UTP. May have a dual role in cell division arrest and in preventing the incorporation of modified nucleotides into cellular nucleic acids. This chain is dTTP/UTP pyrophosphatase, found in Ruegeria sp. (strain TM1040) (Silicibacter sp.).